A 168-amino-acid chain; its full sequence is 2-C-methyl-D-erythritol 2,4-cyclodiphosphate synthase (168 aa).

The a divalent metal cation site is built by aspartate 13 and histidine 15. 4-CDP-2-C-methyl-D-erythritol 2-phosphate contacts are provided by residues 13 to 15 (DVH) and 39 to 40 (HS). Histidine 47 is a binding site for a divalent metal cation. Residues 61–63 (DIG), 66–70 (FPDTD), phenylalanine 144, and arginine 147 contribute to the 4-CDP-2-C-methyl-D-erythritol 2-phosphate site.

It belongs to the IspF family. Homotrimer. The cofactor is a divalent metal cation.

The enzyme catalyses 4-CDP-2-C-methyl-D-erythritol 2-phosphate = 2-C-methyl-D-erythritol 2,4-cyclic diphosphate + CMP. The protein operates within isoprenoid biosynthesis; isopentenyl diphosphate biosynthesis via DXP pathway; isopentenyl diphosphate from 1-deoxy-D-xylulose 5-phosphate: step 4/6. In terms of biological role, involved in the biosynthesis of isopentenyl diphosphate (IPP) and dimethylallyl diphosphate (DMAPP), two major building blocks of isoprenoid compounds. Catalyzes the conversion of 4-diphosphocytidyl-2-C-methyl-D-erythritol 2-phosphate (CDP-ME2P) to 2-C-methyl-D-erythritol 2,4-cyclodiphosphate (ME-CPP) with a corresponding release of cytidine 5-monophosphate (CMP). The sequence is that of 2-C-methyl-D-erythritol 2,4-cyclodiphosphate synthase from Ralstonia nicotianae (strain ATCC BAA-1114 / GMI1000) (Ralstonia solanacearum).